The chain runs to 297 residues: Coatomer subunit epsilon-2 (297 aa).

The protein belongs to the COPE family. As to quaternary structure, oligomeric complex that consists of at least the alpha, beta, beta', gamma, delta, epsilon and zeta subunits.

The protein localises to the cytoplasm. It is found in the golgi apparatus membrane. Its subcellular location is the cytoplasmic vesicle. It localises to the COPI-coated vesicle membrane. The coatomer is a cytosolic protein complex that binds to dilysine motifs and reversibly associates with Golgi non-clathrin-coated vesicles, which further mediate biosynthetic protein transport from the ER, via the Golgi up to the trans Golgi network. The coatomer complex is required for budding from Golgi membranes, and is essential for the retrograde Golgi-to-ER transport of dilysine-tagged proteins. The sequence is that of Coatomer subunit epsilon-2 from Oryza sativa subsp. indica (Rice).